The sequence spans 414 residues: Nuclear pore complex-interacting protein family member B7 (414 aa).

The signal sequence occupies residues 1–18 (MRLRFWLLIWLLLGFISH). An N-linked (GlcNAc...) asparagine glycan is attached at asparagine 111. 2 disordered regions span residues 242 to 262 (RMGR…NSLS) and 335 to 402 (SPLP…LRTR). A compositionally biased stretch (polar residues) spans 252-262 (QQHSITDNSLS). Residues 356 to 384 (EVEKPPKPKRWRVDEVEQSPKPKRQREAE) are compositionally biased toward basic and acidic residues. Residues 390–402 (KPKRRRLSKLRTR) show a composition bias toward basic residues.

This sequence belongs to the NPIP family.

It is found in the secreted. This Homo sapiens (Human) protein is Nuclear pore complex-interacting protein family member B7 (NPIPB7).